Here is a 699-residue protein sequence, read N- to C-terminus: DNA ligase (699 aa).

The disordered stretch occupies residues 1–20; it reads MTVQKPIESLSPAQAKREHR. NAD(+) is bound by residues 43–47, 92–93, and glutamate 126; these read DAEYD and SL. Lysine 128 serves as the catalytic N6-AMP-lysine intermediate. 4 residues coordinate NAD(+): arginine 149, glutamate 185, lysine 301, and lysine 325. Residues cysteine 419, cysteine 422, cysteine 443, and cysteine 449 each coordinate Zn(2+). Residues 621–699 form the BRCT domain; the sequence is AKESPVAGKT…EEDWLKLVGE (79 aa).

Belongs to the NAD-dependent DNA ligase family. LigA subfamily. It depends on Mg(2+) as a cofactor. Mn(2+) serves as cofactor.

It catalyses the reaction NAD(+) + (deoxyribonucleotide)n-3'-hydroxyl + 5'-phospho-(deoxyribonucleotide)m = (deoxyribonucleotide)n+m + AMP + beta-nicotinamide D-nucleotide.. DNA ligase that catalyzes the formation of phosphodiester linkages between 5'-phosphoryl and 3'-hydroxyl groups in double-stranded DNA using NAD as a coenzyme and as the energy source for the reaction. It is essential for DNA replication and repair of damaged DNA. The sequence is that of DNA ligase from Beijerinckia indica subsp. indica (strain ATCC 9039 / DSM 1715 / NCIMB 8712).